Here is a 74-residue protein sequence, read N- to C-terminus: High-potential iron-sulfur protein (74 aa).

[4Fe-4S] cluster contacts are provided by C36, C39, C53, and C67.

This sequence belongs to the high-potential iron-sulfur protein (HiPIP) family. Homodimer.

Specific class of high-redox-potential 4Fe-4S ferredoxins. Functions in anaerobic electron transport in most purple and in some other photosynthetic bacteria and in at least one genus (Paracoccus) of halophilic, denitrifying bacteria. This is High-potential iron-sulfur protein (hip) from Rubrivivax gelatinosus (Rhodocyclus gelatinosus).